The following is a 3726-amino-acid chain: Zinc finger homeobox protein 3 (3726 aa).

Disordered stretches follow at residues 1–79 (MEGC…SKEV) and 95–129 (MEHH…VENL). Residues 79–103 (VSCNECSASFSSLQTYMEHHCPGTH) form a C2H2-type 1 zinc finger. Residues 116–126 (TSEEGEEESDV) are compositionally biased toward acidic residues. A C2H2-type 2 zinc finger spans residues 282–305 (LMCFLCKLSFGYVRSFVTHAVHDH). Positions 417-557 (SVPLGPLASS…GPASTTSNSA (141 aa)) are disordered. Position 426 is a phosphoserine (S426). The residue at position 428 (T428) is a Phosphothreonine. Over residues 431–459 (SEGKDSGAAEGDKQESGGHQDCFSEKVEP) the composition is skewed to basic and acidic residues. Acidic residues-rich tracts occupy residues 460-491 (AEEE…EEEE) and 500-510 (DLEEELEDSPS). The span at 528–557 (SNPSISNSPLMPNVLQTLSRGPASTTSNSA) shows a compositional bias: polar residues. A phosphoserine mark is found at S535 and S573. The segment at 590–621 (DFADESANKDSATAPEPNESTEGDDGGFVPHH) is disordered. 3 consecutive C2H2-type zinc fingers follow at residues 641–664 (VECP…TMMH), 672–695 (LKCP…KEKH), and 727–751 (FRCE…SDKH). The segment at 805-829 (WRCEVCDYETNVARNLRIHMTSEKH) adopts a C2H2-type 6; atypical zinc-finger fold. The C2H2-type 7; degenerate zinc-finger motif lies at 946–969 (FQCAVCNKFTTDNLDMLGLHMNVE). The C2H2-type 8; atypical zinc finger occupies 985–1009 (YQCKLCRYNTQLKANFQLHCKTDKH). Residues 1041–1065 (LKCNACDYYTNSLEKLRLHTVNSRH) form a C2H2-type 9; atypical zinc finger. The segment at 1089–1113 (YHCVLCNYSTKAKLNLIQHVRSMKH) adopts a C2H2-type 10; atypical zinc-finger fold. Positions 1125–1228 (LQKGLPEEDE…KRPKASEEIK (104 aa)) are disordered. The segment covering 1149–1159 (DPEEPVEDAEG) has biased composition (acidic residues). Polar residues-rich tracts occupy residues 1175–1191 (GSGS…SSSQ) and 1199–1217 (SPAT…TPLS). At S1207 the chain carries Phosphoserine. The segment at 1233–1256 (YQCPYCKYSNADVNRLRVHAMTQH) adopts a C2H2-type 11; atypical zinc-finger fold. The segment at 1262 to 1285 (LRCPLCQDMLNNKIHLQLHLTHLH) adopts a C2H2-type 12 zinc-finger fold. The segment at 1320-1361 (DGNSTLEEVGKQPEASEDPGKNILPPASMEHGGDLKPTSADP) is disordered. 3 consecutive C2H2-type zinc fingers follow at residues 1370-1395 (FLCW…NEVH), 1411-1433 (YRCN…SQYH), and 1439-1462 (TMCC…ETSH). The interval 1500–1539 (EEDKEEESDLEDKQSPTGSDSGSVQEDSGSEPKRALPFRK) is disordered. A compositionally biased stretch (polar residues) spans 1514-1526 (SPTGSDSGSVQED). Residues 1555 to 1579 (YKCTVCKESFTQKNILLVHYNSVSH) form a C2H2-type 16 zinc finger. A Phosphoserine modification is found at S1600. Residues 1606-1630 (FKCNTCNVAYSQSSTLEIHMRSVLH) form a C2H2-type 17 zinc finger. Disordered stretches follow at residues 1639 to 1678 (LEAA…TATN), 1706 to 1738 (NPIS…QQQQ), and 1866 to 1943 (LSQS…PRIA). Low complexity predominate over residues 1643-1669 (SGNSNGTGNSGGVSLSSSTPSPVGSSG). Positions 1717 to 1727 (EPKEANRKKLA) are enriched in basic and acidic residues. Low complexity predominate over residues 1866–1878 (LSQSHSALLQPSQ). Basic and acidic residues predominate over residues 1879 to 1902 (HPEKKNKVVIKEKDKESQREREGP). The segment at 1990-2013 (LECDSCGKLFSNILILKSHQEHVH) adopts a C2H2-type 18 zinc-finger fold. Disordered stretches follow at residues 2037–2089 (YPLR…AQPS) and 2211–2249 (NKDS…WGSK). Pro residues predominate over residues 2041–2066 (PQTPEPPPPPPPPPPPPLPTAPPQPA). A DNA-binding region (homeobox 1) is located at residues 2152 to 2211 (NKRPRTRITDDQLRVLRQYFDINNSPSEEQIKEMADKSGLPQKVIKHWFRNTLFKERQRN). Residues 2214–2223 (SPYNFSNPPI) show a composition bias toward polar residues. Positions 2249–2308 (KRSSRTRFTDYQLRVLQDFFDANAYPKDDEFEQLSNLLNLPTRVIVVWFQNARQKARKNY) form a DNA-binding region, homeobox 2. A C2H2-type 19; atypical zinc finger spans residues 2335–2358 (YQCKKCSLVFQRIFDLIKHQKKLC). K2356 is covalently cross-linked (Glycyl lysine isopeptide (Lys-Gly) (interchain with G-Cter in SUMO1)). Disordered regions lie at residues 2383–2405 (TPTS…APSA) and 2429–2529 (NSKA…PQQL). A compositionally biased stretch (low complexity) spans 2458 to 2478 (QPKPEMQQQLEQLEQKTNAPQ). A compositionally biased stretch (pro residues) spans 2479 to 2507 (PKLPQPAAPSLPQPPPQAPPPQCPLPQSS). Over residues 2508–2521 (PSPSQLSHLPLKPL) the composition is skewed to low complexity. Residues 2539–2561 (YQCDQCKLAFPSFEHWQEHQQLH) form a C2H2-type 20 zinc finger. The Nuclear localization signal signature appears at 2624-2626 (KRK). Residues 2628–2656 (EEKASASPGENDSGTGGEEPQRDKRLRTT) form a disordered region. Position 2634 is a phosphoserine (S2634). A DNA-binding region (homeobox 3) is located at residues 2650–2709 (DKRLRTTITPEQLEILYQKYLLDSNPTRKMLDHIAHEVGLKKRVVQVWFQNTRARERKGQ). A C2H2-type 21 zinc finger spans residues 2720 to 2743 (RRCPFCRALFKAKTALEAHIRSRH). Polar residues predominate over residues 2780–2789 (SHLPPSSSDG). Residues 2780–2805 (SHLPPSSSDGQGVPLSPVSKTMELSP) form a disordered region. S2795 and S2804 each carry phosphoserine. Residue K2815 forms a Glycyl lysine isopeptide (Lys-Gly) (interchain with G-Cter in SUMO1); alternate linkage. A Glycyl lysine isopeptide (Lys-Gly) (interchain with G-Cter in SUMO2); alternate cross-link involves residue K2815. The interval 2850 to 2877 (AITDTTTGDEGNADNDSATGIATETKSS) is disordered. Residues S2900 and S2904 each carry the phosphoserine modification. The tract at residues 2920–2955 (VDYSETSSLADPCSPSPGASGSAGKSGDGGDRPGQK) is disordered. Positions 2929 to 2944 (ADPCSPSPGASGSAGK) are enriched in low complexity. The homeobox 4 DNA-binding region spans 2952–3011 (PGQKRFRTQMTNLQLKVLKSCFNDYRTPTMLECEVLGNDIGLPKRVVQVWFQNARAKEKK). A C2H2-type 22 zinc finger spans residues 3032–3056 (TECTLCGIKYSARLSVRDHIFSQQH). 2 disordered regions span residues 3145-3274 (FTPA…AGTG) and 3415-3476 (QQQQ…SASA). Residues 3147–3156 (PANTALTSPK) are compositionally biased toward polar residues. The span at 3181-3199 (PSSASLSSPTPAQATMAMA) shows a compositional bias: low complexity. The segment covering 3200-3221 (PQPPPQPQQPQPPVQQPPPPPA) has biased composition (pro residues). Low complexity predominate over residues 3222-3234 (AQQIPAPQLTPQQ). Residues 3235 to 3267 (QRKDKDGEKGKEKEKAHKGKGEPLPVPKKEKGE) show a composition bias toward basic and acidic residues. Residue K3262 forms a Glycyl lysine isopeptide (Lys-Gly) (interchain with G-Cter in SUMO1) linkage. A Phosphoserine modification is found at S3434. The span at 3435 to 3453 (PDKDPAKESPKPEEQKNVP) shows a compositional bias: basic and acidic residues. S3457 carries the phosphoserine modification. The C2H2-type 23 zinc finger occupies 3552 to 3576 (YHCLACESALCGEEALSQHLESALH). The interval 3588-3726 (AKEHPSLLPH…TSVGTDTFRL (139 aa)) is disordered. 2 stretches are compositionally biased toward low complexity: residues 3605 to 3618 (STAS…HSND) and 3645 to 3677 (SRAS…VQPS). At S3616 the chain carries Phosphoserine. The residue at position 3700 (S3700) is a Phosphoserine. Polar residues predominate over residues 3715-3726 (GLTSVGTDTFRL).

Interacts with ALKBH4 and PIAS3. Interacts with FNBP3. Interacts with ESR1, RUNX3, TRIM25, SMAD2 and SMAD3. Phosphorylated at Ser-2634 in both embryonic and adult brain. Phosphorylation at Ser-1600, Ser-2795, Ser-2804, Ser-2900, Ser-3434, Ser-3616 and Ser-3700 is restricted to the embryonic brain. Hyperphosphorylation in embryonic brain protects ZFHX3 from calpain/CAPN1-mediated degradation. In terms of processing, ubiquitinated, leading to its proteasomal degradation. Post-translationally, nuclear localization is essential for its sumoylation. In terms of tissue distribution, expressed in suprachiasmatic nucleus (SCN) of the brain (at protein level). Expressed in skeletal muscle. Levels of expression are high in myoblasts but low in differentiated muscle. Expressed in the heart, primarily in the atria.

The protein resides in the nucleus. It is found in the cytoplasm. Transcriptional regulator which can act as an activator or a repressor. Inhibits the enhancer element of the AFP gene by binding to its AT-rich core sequence. In concert with SMAD-dependent TGF-beta signaling can repress the transcription of AFP via its interaction with SMAD2/3. Regulates the circadian locomotor rhythms via transcriptional activation of neuropeptidergic genes which are essential for intercellular synchrony and rhythm amplitude in the suprachiasmatic nucleus (SCN) of the brain. Regulator of myoblasts differentiation through the binding to the AT-rich sequence of MYF6 promoter and promoter repression. Down-regulates the MUC5AC promoter in gastric cancer. In association with RUNX3, up-regulates CDKN1A promoter activity following TGF-beta stimulation. This chain is Zinc finger homeobox protein 3 (Zfhx3), found in Mus musculus (Mouse).